The primary structure comprises 350 residues: 2-oxoisovalerate dehydrogenase subunit beta (350 aa).

As to quaternary structure, heterodimer of an alpha and a beta chain. The cofactor is thiamine diphosphate.

It catalyses the reaction N(6)-[(R)-lipoyl]-L-lysyl-[protein] + 3-methyl-2-oxobutanoate + H(+) = N(6)-[(R)-S(8)-2-methylpropanoyldihydrolipoyl]-L-lysyl-[protein] + CO2. In terms of biological role, the branched-chain alpha-keto dehydrogenase complex catalyzes the overall conversion of alpha-keto acids to acyl-CoA and CO(2). It contains multiple copies of three enzymatic components: branched-chain alpha-keto acid decarboxylase (E1), lipoamide acyltransferase (E2) and lipoamide dehydrogenase (E3). In Pseudomonas aeruginosa (strain ATCC 15692 / DSM 22644 / CIP 104116 / JCM 14847 / LMG 12228 / 1C / PRS 101 / PAO1), this protein is 2-oxoisovalerate dehydrogenase subunit beta (bkdA2).